Consider the following 373-residue polypeptide: Envelope glycoprotein C homolog (373 aa).

A signal peptide spans 1 to 25; the sequence is MVSNMRSTRTALTGWVGIFLVLSLQ. The segment at 58 to 93 is disordered; sequence EVPNSPTTELSTTVATKTAVPTTESTSSSEAHRNSS. A compositionally biased stretch (polar residues) spans 59–68; that stretch reads VPNSPTTELS. The segment covering 69–80 has biased composition (low complexity); sequence TTVATKTAVPTT. Asn-91, Asn-111, Asn-203, and Asn-345 each carry an N-linked (GlcNAc...) asparagine; by host glycan. The 99-residue stretch at 249-347 folds into the Ig-like domain; sequence PASVDVLAPP…GDMISTSNAT (99 aa).

It belongs to the herpesviridae glycoprotein C family.

In Gallus gallus (Chicken), this protein is Envelope glycoprotein C homolog (gC).